A 224-amino-acid polypeptide reads, in one-letter code: Putative cobalt transport protein CbiM (224 aa).

6 helical membrane-spanning segments follow: residues 8-28, 41-61, 75-95, 108-128, 138-158, and 169-189; these read LPPL…VYGI, AMPM…LKMP, FGAV…VLVF, LGAN…AVWL, EIAM…VTAI, and FFTA…PLAI.

The protein belongs to the CbiM family. In terms of assembly, forms an energy-coupling factor (ECF) transporter complex composed of an ATP-binding protein (A component, CbiO), a transmembrane protein (T component, CbiQ) and 2 possible substrate-capture proteins (S components, CbiM and CbiN) of unknown stoichimetry.

The protein resides in the cell membrane. Its pathway is cofactor biosynthesis; adenosylcobalamin biosynthesis. Its function is as follows. Part of the energy-coupling factor (ECF) transporter complex CbiMNOQ involved in cobalt import. This is Putative cobalt transport protein CbiM from Methanosphaera stadtmanae (strain ATCC 43021 / DSM 3091 / JCM 11832 / MCB-3).